The primary structure comprises 200 residues: Cuticle protein 21.3 (200 aa).

10 repeat units span residues 98-101 (AAPA), 104-107 (AAPA), 116-119 (AAPA), 121-124 (AAPA), 133-136 (AAPA), 154-157 (AAPA), 166-169 (AAPA), 178-181 (AAPA), 184-187 (AAPA), and 196-199 (AAPA).

Its function is as follows. Component of the cuticle of migratory locust which contains more than 100 different structural proteins. The polypeptide is Cuticle protein 21.3 (Locusta migratoria (Migratory locust)).